The chain runs to 394 residues: Immune-associated nucleotide-binding protein 12 (394 aa).

The AIG1-type G domain occupies Lys-45–Arg-251. The G1 stretch occupies residues Gly-54–Ser-61. Residues Gly-54–Ala-62 and Ser-75 each bind GTP. A G2 region spans residues Gly-81–Ala-85. Residues Asp-103–Gly-106 form a G3 region. The interval Thr-173–Asp-176 is G4. Residues Arg-210–Arg-212 are G5. Residue Asn-211 participates in GTP binding. The stretch at Asn-289–Ser-387 forms a coiled coil.

It belongs to the TRAFAC class TrmE-Era-EngA-EngB-Septin-like GTPase superfamily. AIG1/Toc34/Toc159-like paraseptin GTPase family. IAN subfamily.

This chain is Immune-associated nucleotide-binding protein 12, found in Arabidopsis thaliana (Mouse-ear cress).